The sequence spans 206 residues: Macrophage immunometabolism regulator (206 aa).

It belongs to the UNC119-binding protein family. In terms of assembly, interacts with unc119 family proteins; interaction preferentially takes place when unc119 proteins are unliganded with myristoylated proteins.

The protein resides in the cytoplasm. It is found in the cell projection. The protein localises to the cilium. May play a role in immune regulation through regulation of the macrophage function. Involved in the recruitment of macrophages in response to injury. May also play a role in trafficking of proteins via its interaction with unc119 family cargo adapters. May play a role in ciliary membrane localization. Functionally, regulates the macrophage function, by enhancing the resolution of inflammation and wound repair functions mediated by M2 macrophages. The regulation of macrophage function is, due at least in part, to the role of C5orf30 in regulating ability to inhibit glycolysis. Probably plays alaso a role in trafficking of proteins via its interaction with UNC119 and UNC119B cargo adapters: may help the release of UNC119 and UNC119B cargo or the recycling of UNC119 and UNC119B. May play a role in ciliary membrane localization via its interaction with UNC119B and protein transport into photoreceptor cells. This Danio rerio (Zebrafish) protein is Macrophage immunometabolism regulator (macir).